The primary structure comprises 243 residues: Geranylgeranylglyceryl phosphate synthase (243 aa).

Mg(2+) contacts are provided by Asp22 and Ser51. Residues 170–176 (YLESGSG), 201–202 (GG), and 223–224 (GT) each bind sn-glycerol 1-phosphate.

It belongs to the GGGP/HepGP synthase family. Group II subfamily. It depends on Mg(2+) as a cofactor.

It localises to the cytoplasm. It carries out the reaction sn-glycerol 1-phosphate + (2E,6E,10E)-geranylgeranyl diphosphate = sn-3-O-(geranylgeranyl)glycerol 1-phosphate + diphosphate. It participates in membrane lipid metabolism; glycerophospholipid metabolism. Prenyltransferase that catalyzes the transfer of the geranylgeranyl moiety of geranylgeranyl diphosphate (GGPP) to the C3 hydroxyl of sn-glycerol-1-phosphate (G1P). This reaction is the first ether-bond-formation step in the biosynthesis of archaeal membrane lipids. The chain is Geranylgeranylglyceryl phosphate synthase from Picrophilus torridus (strain ATCC 700027 / DSM 9790 / JCM 10055 / NBRC 100828 / KAW 2/3).